Consider the following 506-residue polypeptide: Glutamate--tRNA ligase (506 aa).

The short motif at 9–19 (PSPTGFQHIGG) is the 'HIGH' region element. A 'KMSKS' region motif is present at residues 251–255 (KLSKR). K254 is a binding site for ATP.

This sequence belongs to the class-I aminoacyl-tRNA synthetase family. Glutamate--tRNA ligase type 1 subfamily. In terms of assembly, monomer.

It is found in the cytoplasm. It carries out the reaction tRNA(Glu) + L-glutamate + ATP = L-glutamyl-tRNA(Glu) + AMP + diphosphate. Its function is as follows. Catalyzes the attachment of glutamate to tRNA(Glu) in a two-step reaction: glutamate is first activated by ATP to form Glu-AMP and then transferred to the acceptor end of tRNA(Glu). In Treponema denticola (strain ATCC 35405 / DSM 14222 / CIP 103919 / JCM 8153 / KCTC 15104), this protein is Glutamate--tRNA ligase.